The chain runs to 43 residues: uncharacterized protein (43 aa).

This is an uncharacterized protein from Saccharomyces cerevisiae (strain ATCC 204508 / S288c) (Baker's yeast).